The sequence spans 337 residues: Glycine N(alpha)-acyltransferase (337 aa).

This sequence belongs to the acetyltransferase family.

The enzyme catalyses a (3R)-hydroxyacyl-[ACP] + glycine = a lyso-glycine lipid + holo-[ACP] + H(+). It carries out the reaction (3R)-hydroxyhexadecanoyl-[ACP] + glycine = N-[(3R)-3-hydroxyhexadecanoyl]-glycine + holo-[ACP] + H(+). It participates in lipid metabolism. In terms of biological role, is involved in the production of glycine lipids (GL), which are phosphorus-free membrane lipids important for fitness during growth of the human gut bacterium B.thetaiotaomicron in vivo and in vitro. Catalyzes the first step of GL biosynthesis, i.e. the N-acylation of glycine via addition of a 3-hydroxy fatty acyl group, to form a range of monoacylated glycine (also named lyso-glycine lipids or lyso-GL). Is important for the ability of B.thetaiotaomicron to adapt to stress and colonize the mammalian gut. Also seems to be required for the production of flavolipin, an acylated serine-glycine dipeptide. The sequence is that of Glycine N(alpha)-acyltransferase from Bacteroides thetaiotaomicron (strain ATCC 29148 / DSM 2079 / JCM 5827 / CCUG 10774 / NCTC 10582 / VPI-5482 / E50).